Here is a 365-residue protein sequence, read N- to C-terminus: Transcription factor KUA1 (365 aa).

Residues 1 to 21 (MTRRCSHCNHNGHNSRTCPNR) are disordered. The CCHC-type zinc-finger motif lies at 3 to 20 (RRCSHCNHNGHNSRTCPN). Residues 8–18 (CNHNGHNSRTC) show a composition bias toward polar residues. Positions 24–28 (KLFGV) match the R/KLFGV (transcriptional repression) motif. The tract at residues 41-99 (MGNLSHYTGSGSGGHGTGSNTPGSPGDVPDHVAGDGYASEDFVAGSSSSRERKKGTPWT) is disordered. Residues 90 to 146 (RERKKGTPWTEEEHRMFLLGLQKLGKGDWRGISRNYVTTRTPTQVASHAQKYFIRQS) form the HTH myb-type domain. A DNA-binding region (H-T-H motif) is located at residues 118–142 (WRGISRNYVTTRTPTQVASHAQKYF). 2 disordered regions span residues 214–254 (SMDS…QPQL) and 321–365 (ESNK…IHAL). Residues 220 to 254 (STTGEPTATAAAASSSSRLEETTQLQSQLQPQPQL) are compositionally biased toward low complexity. Positions 343–355 (RQSAFHPNPSSDS) are enriched in polar residues.

In terms of tissue distribution, expressed ubiquitously, except in hypocotyls, root tips and lateral root primordia.

It is found in the nucleus. In terms of biological role, transcriptional repressor. Direct regulator of the transcription of peroxidase (Prxs) and reactive oxygen species (ROS)-related genes via the recognition of 5'-ATCACA-3' motif. Binds to 5'-TATCCA-3' motif (TA box) and represses the activity of corresponding promoters (e.g. sugar response genes). Regulates hypocotyl elongation in response to darkness by enhancing auxin accumulation in a phytochrome-interacting factor (PIF) proteins-dependent manner. Promotes lateral roots formation. Promotes cell expansion during leaves development via the modulation of cell wall-located Prxs. Plays a critical role in developmentally regulated and dark-induced onset of leaf senescence by repressing the transcription of several genes involved in chloroplast function and responses to light and auxin. Promotes responses to auxin, abscisic acid (ABA), and ethylene. The protein is Transcription factor KUA1 of Arabidopsis thaliana (Mouse-ear cress).